Here is a 592-residue protein sequence, read N- to C-terminus: Salivary peroxidase/catechol oxidase (592 aa).

Positions Met1–Ala21 are cleaved as a signal peptide. The cysteines at positions 24 and 37 are disulfide-linked. Asn25 carries N-linked (GlcNAc...) asparagine glycosylation. Catalysis depends on His110, which acts as the Proton acceptor. Ca(2+) is bound by residues Asp111, Thr187, Phe189, Asp191, and Ser193. An N-linked (GlcNAc...) asparagine glycan is attached at Asn230. Residues Cys235 and Cys244 are joined by a disulfide bond. Residue His353 participates in heme b binding. Asn366 carries N-linked (GlcNAc...) asparagine glycosylation. Disulfide bonds link Cys452-Cys509 and Cys553-Cys580.

This sequence belongs to the peroxidase family. XPO subfamily. Female salivary gland.

It is found in the secreted. It catalyses the reaction 2 catechol + O2 = 2 1,2-benzoquinone + 2 H2O. In terms of biological role, inhibits noradrenaline-induced smooth muscle contraction in the host, probably due to the oxidation of noradrenaline, resulting in vasodilation. Exhibits peroxidase activity. The sequence is that of Salivary peroxidase/catechol oxidase from Anopheles albimanus (New world malaria mosquito).